We begin with the raw amino-acid sequence, 289 residues long: ATP synthase gamma chain (289 aa).

The protein belongs to the ATPase gamma chain family. As to quaternary structure, F-type ATPases have 2 components, CF(1) - the catalytic core - and CF(0) - the membrane proton channel. CF(1) has five subunits: alpha(3), beta(3), gamma(1), delta(1), epsilon(1). CF(0) has three main subunits: a, b and c.

Its subcellular location is the cell inner membrane. Produces ATP from ADP in the presence of a proton gradient across the membrane. The gamma chain is believed to be important in regulating ATPase activity and the flow of protons through the CF(0) complex. The sequence is that of ATP synthase gamma chain from Dichelobacter nodosus (strain VCS1703A).